The chain runs to 2359 residues: Voltage-dependent T-type calcium channel subunit alpha-1H (2359 aa).

Residues M1–G63 are disordered. At M1–P100 the chain is on the cytoplasmic side. Low complexity predominate over residues A24 to P36. Residues T87–F422 form an I repeat. A helical membrane pass occupies residues W101 to M119. At F120–D141 the chain is on the extracellular side. D140 serves as a coordination point for Zn(2+). A helical transmembrane segment spans residues F142–L160. Topologically, residues F161–D169 are cytoplasmic. Residues T170–M184 traverse the membrane as a helical segment. Residues E185–V193 are Extracellular-facing. D189 and H191 together coordinate Zn(2+). Residue N192 is glycosylated (N-linked (GlcNAc...) asparagine). The helical transmembrane segment at S194–R212 threads the bilayer. At V213 to N232 the chain is on the cytoplasmic side. The chain crosses the membrane as a helical span at residues V233 to A253. Over G254–Y394 the chain is Extracellular. N271 carries N-linked (GlcNAc...) asparagine glycosylation. Residues N395–A419 traverse the membrane as a helical segment. Residues T420–K790 are Cytoplasmic-facing. 3 disordered regions span residues V490–V573, G620–P656, and G737–P769. Positions R503 to F532 are enriched in basic residues. The span at P557–G566 shows a compositional bias: pro residues. Polar residues predominate over residues G620 to R631. Residues W776 to F1015 form an II repeat. A helical membrane pass occupies residues Y791–Y811. Topologically, residues H812–I824 are extracellular. The helical transmembrane segment at S825–P846 threads the bilayer. Residues L847–N852 lie on the Cytoplasmic side of the membrane. Residues P853–G871 traverse the membrane as a helical segment. Topologically, residues Q872 to V879 are extracellular. Residues L880–V903 traverse the membrane as a helical segment. The Cytoplasmic segment spans residues V904–T914. Residues F915–G935 traverse the membrane as a helical segment. At C936–W987 the chain is on the extracellular side. Residues A988 to V1012 form a helical membrane-spanning segment. At E1013–V1301 the chain is on the cytoplasmic side. The tract at residues G1061–P1197 is disordered. Positions S1117–C1126 are enriched in polar residues. Over residues G1130–R1147 the composition is skewed to low complexity. The stretch at N1292 to F1569 is one III repeat. The helical transmembrane segment at I1302–L1324 threads the bilayer. At E1325–S1342 the chain is on the extracellular side. The helical transmembrane segment at N1343–L1363 threads the bilayer. The Cytoplasmic segment spans residues L1364 to S1373. A helical membrane pass occupies residues S1374–A1393. Topologically, residues M1394–R1407 are extracellular. Residues V1408–L1429 traverse the membrane as a helical segment. Residues V1430 to R1439 lie on the Cytoplasmic side of the membrane. Residues P1440–F1463 traverse the membrane as a helical segment. At K1464–P1540 the chain is on the extracellular side. N-linked (GlcNAc...) asparagine glycosylation occurs at N1477. A helical transmembrane segment spans residues W1541–V1566. Residues E1567–S1621 are Cytoplasmic-facing. Residues D1607 to L1868 form an IV repeat. The chain crosses the membrane as a helical span at residues H1622 to E1642. Over H1643–Y1656 the chain is Extracellular. Residues C1657–F1678 traverse the membrane as a helical segment. Over R1679 to R1685 the chain is Cytoplasmic. A helical transmembrane segment spans residues W1686 to E1704. The Extracellular portion of the chain corresponds to E1705–I1718. Residues I1719 to A1742 form a helical membrane-spanning segment. The Cytoplasmic segment spans residues L1743–N1756. The helical transmembrane segment at L1757–G1777 threads the bilayer. Over R1778–L1840 the chain is Extracellular. The chain crosses the membrane as a helical span at residues S1841 to L1868. Residues E1869–V2359 lie on the Cytoplasmic side of the membrane. Over residues Q1891 to T1911 the composition is skewed to polar residues. Disordered stretches follow at residues Q1891–N1913, S1974–L2003, H2016–W2258, and P2335–V2359. Basic and acidic residues predominate over residues H2016 to D2026. Positions D2086–E2096 are enriched in acidic residues. Residues G2166–E2181 are compositionally biased toward basic and acidic residues.

This sequence belongs to the calcium channel alpha-1 subunit (TC 1.A.1.11) family. CACNA1H subfamily. In terms of assembly, interacts (via N-terminal cytoplasmic domain) with STAC. In terms of processing, in response to raising of intracellular calcium, the T-type channels are activated by CaM-kinase II. As to expression, expressed in brain.

The protein localises to the cell membrane. The enzyme catalyses Ca(2+)(in) = Ca(2+)(out). Its function is as follows. Voltage-sensitive calcium channel that gives rise to T-type calcium currents. T-type calcium channels belong to the 'low-voltage activated (LVA)' group. A particularity of this type of channel is an opening at quite negative potentials, and a voltage-dependent inactivation. T-type channels serve pacemaking functions in both central neurons and cardiac nodal cells and support calcium signaling in secretory cells and vascular smooth muscle. They may also be involved in the modulation of firing patterns of neurons. In the adrenal zona glomerulosa, participates in the signaling pathway leading to aldosterone production in response to either AGT/angiotensin II, or hyperkalemia. In Rattus norvegicus (Rat), this protein is Voltage-dependent T-type calcium channel subunit alpha-1H (Cacna1h).